Consider the following 629-residue polypeptide: Methyl-accepting chemotaxis protein PscA (629 aa).

At 1–9 (MKNLGFSKK) the chain is on the cytoplasmic side. A helical membrane pass occupies residues 10-30 (ILLAAALIVVVAFSVFIVIND). Topologically, residues 31-276 (YRQRQSLKSS…AYAMLTEFRT (246 aa)) are periplasmic. Positions 36-258 (SLKSSVKSEL…QGVATANWYV (223 aa)) constitute a Cache domain. The helical transmembrane segment at 277 to 297 (SAITAMVVVVMVIILLLGPLI) threads the bilayer. The 55-residue stretch at 298 to 352 (RVLMQPLHQMGRAMRDIADGEGDLTKRLAITSHDEFGALAESFNHFVERIHTSIR) folds into the HAMP domain. At 298–629 (RVLMQPLHQM…LQQLVGSFRI (332 aa)) the chain is on the cytoplasmic side. Positions 357 to 593 (TAAQLGEVAT…SINVDITHIN (237 aa)) constitute a Methyl-accepting transducer domain.

Belongs to the methyl-accepting chemotaxis (MCP) protein family.

Its subcellular location is the cell inner membrane. In terms of biological role, chemotactic-signal transducers respond to changes in the concentration of attractants and repellents in the environment, transduce a signal from the outside to the inside of the cell, and facilitate sensory adaptation through the variation of the level of methylation. PscA recognizes specifically and with high affinity L-Asp, D-Asp and L-Glu. It exerts a double function, in mediating chemotaxis to these amino acids and in modulating cyclic di-GMP (c-di-GMP) levels, causing alterations in biofilm development. Plays a key role in the infection process. It may facilitate bacterial entry into the plant. This chain is Methyl-accepting chemotaxis protein PscA, found in Pseudomonas syringae pv. tomato (strain ATCC BAA-871 / DC3000).